The chain runs to 78 residues: NAD(P)H-quinone oxidoreductase subunit L (78 aa).

2 consecutive transmembrane segments (helical) span residues 10–30 (IILIIYAALAGAYFLVMPAIV) and 47–67 (VFMYFLMFLFFPGMLVLSPFL).

It belongs to the complex I NdhL subunit family. NDH-1 can be composed of about 15 different subunits; different subcomplexes with different compositions have been identified which probably have different functions.

The protein resides in the cellular thylakoid membrane. The enzyme catalyses a plastoquinone + NADH + (n+1) H(+)(in) = a plastoquinol + NAD(+) + n H(+)(out). It carries out the reaction a plastoquinone + NADPH + (n+1) H(+)(in) = a plastoquinol + NADP(+) + n H(+)(out). Functionally, NDH-1 shuttles electrons from an unknown electron donor, via FMN and iron-sulfur (Fe-S) centers, to quinones in the respiratory and/or the photosynthetic chain. The immediate electron acceptor for the enzyme in this species is believed to be plastoquinone. Couples the redox reaction to proton translocation, and thus conserves the redox energy in a proton gradient. Cyanobacterial NDH-1 also plays a role in inorganic carbon-concentration. The chain is NAD(P)H-quinone oxidoreductase subunit L from Trichodesmium erythraeum (strain IMS101).